The following is a 267-amino-acid chain: Palmitoyltransferase ZDHHC12 (267 aa).

The Cytoplasmic portion of the chain corresponds to 1-9; it reads MALWPPLNS. A helical transmembrane segment spans residues 10-30; the sequence is GMLVRTGHTVLTWGITLVLFL. Residues 31 to 43 lie on the Lumenal side of the membrane; sequence HDTELRQWEEQGE. The helical transmembrane segment at 44-64 threads the bilayer; it reads LLLPLTFLLLVLSSLLLYLAV. The Cytoplasmic portion of the chain corresponds to 65-140; sequence SLMDPGYVTT…ENCVGERNHP (76 aa). Residues 97–147 enclose the DHHC domain; that stretch reads RRCRHCLVLQPLRARHCRDCRRCVRRYDHHCPWMENCVGERNHPLFVAYLA. Cys127 functions as the S-palmitoyl cysteine intermediate in the catalytic mechanism. A helical transmembrane segment spans residues 141–161; it reads LFVAYLALQLVVLLWGLCLAW. Over 162 to 178 the chain is Lumenal; sequence SGLQFFQPWGLWLRSTG. The chain crosses the membrane as a helical span at residues 179 to 199; the sequence is LLFTTFLLLSFFALVVALLLA. The Cytoplasmic portion of the chain corresponds to 200–267; it reads SHLYLVARNT…EEEEGSSQVV (68 aa).

It belongs to the DHHC palmitoyltransferase family.

It is found in the golgi apparatus membrane. It localises to the endoplasmic reticulum membrane. It catalyses the reaction L-cysteinyl-[protein] + hexadecanoyl-CoA = S-hexadecanoyl-L-cysteinyl-[protein] + CoA. In terms of biological role, palmitoyltransferase that catalyzes the addition of palmitate onto various protein substrates. Has a palmitoyltransferase activity toward gephyrin/GPHN, regulating its clustering at synapses and its function in gamma-aminobutyric acid receptor clustering. Thereby, indirectly regulates GABAergic synaptic transmission. Negatively regulates NLRP3-driven inflammation. Catalyzes NLRP3 palmitoylation, leading to its degradation via the chaperone-mediated autophagy (CMA) process. In Mus musculus (Mouse), this protein is Palmitoyltransferase ZDHHC12.